The sequence spans 231 residues: 2-C-methyl-D-erythritol 4-phosphate cytidylyltransferase (231 aa).

Belongs to the IspD/TarI cytidylyltransferase family. IspD subfamily.

The catalysed reaction is 2-C-methyl-D-erythritol 4-phosphate + CTP + H(+) = 4-CDP-2-C-methyl-D-erythritol + diphosphate. It participates in isoprenoid biosynthesis; isopentenyl diphosphate biosynthesis via DXP pathway; isopentenyl diphosphate from 1-deoxy-D-xylulose 5-phosphate: step 2/6. Functionally, catalyzes the formation of 4-diphosphocytidyl-2-C-methyl-D-erythritol from CTP and 2-C-methyl-D-erythritol 4-phosphate (MEP). This is 2-C-methyl-D-erythritol 4-phosphate cytidylyltransferase from Xylella fastidiosa (strain 9a5c).